The following is a 116-amino-acid chain: uncharacterized protein (116 aa).

Residues 97–116 (AKGKGNEGREEAEEASGKSK) form a disordered region. Basic and acidic residues predominate over residues 100 to 116 (KGNEGREEAEEASGKSK).

This sequence belongs to the UPF0440 family.

This is an uncharacterized protein from Pyrococcus horikoshii (strain ATCC 700860 / DSM 12428 / JCM 9974 / NBRC 100139 / OT-3).